A 495-amino-acid polypeptide reads, in one-letter code: Protein-serine O-palmitoleoyltransferase porcupine (495 aa).

8 consecutive transmembrane segments (helical) span residues 46–66, 92–112, 184–204, 232–252, 358–378, 403–422, 434–454, and 475–495; these read TQYI…VLIV, VIDH…AVQW, TVLS…GPWI, MLIH…FLLT, PFGT…LHGL, LATI…SCTV, VINM…GCIF, and TELN…YFVI. His376 is an active-site residue.

Belongs to the membrane-bound acyltransferase family. Porcupine subfamily.

The protein localises to the endoplasmic reticulum membrane. The enzyme catalyses [Wnt protein]-L-serine + (9Z)-hexadecenoyl-CoA = [Wnt protein]-O-(9Z)-hexadecenoyl-L-serine + CoA. Protein-serine O-palmitoleoyltransferase that acts as a key regulator of the Wnt signaling pathway by mediating the attachment of palmitoleate, a 16-carbon monounsaturated fatty acid (C16:1(9Z)), to Wnt proteins. Serine palmitoleoylation of WNT proteins is required for efficient binding to frizzled receptors. The polypeptide is Protein-serine O-palmitoleoyltransferase porcupine (Anopheles gambiae (African malaria mosquito)).